A 645-amino-acid chain; its full sequence is 1-phosphatidylinositol 4,5-bisphosphate phosphodiesterase zeta-1 (645 aa).

Residues Cys42–Arg77 form the EF-hand domain. Positions Gln162–Lys306 constitute a PI-PLC X-box domain. Active-site residues include His177 and His222. Residues Leu385 to Arg501 enclose the PI-PLC Y-box domain. A C2 domain is found at Arg501–Ser625.

As to quaternary structure, interacts via its C2 domain with PtdIns(3)P and, to a lesser extent, PtdIns(5)P in vitro. It depends on Ca(2+) as a cofactor.

Its subcellular location is the nucleus. It localises to the cytoplasm. The protein localises to the perinuclear region. The catalysed reaction is a 1,2-diacyl-sn-glycero-3-phospho-(1D-myo-inositol-4,5-bisphosphate) + H2O = 1D-myo-inositol 1,4,5-trisphosphate + a 1,2-diacyl-sn-glycerol + H(+). In terms of biological role, the production of the second messenger molecules diacylglycerol (DAG) and inositol 1,4,5-trisphosphate (IP3) is mediated by activated phosphatidylinositol-specific phospholipase C enzymes. In vitro, hydrolyzes PtdIns(4,5)P2 in a Ca(2+)-dependent manner. Triggers intracellular Ca(2+) oscillations in oocytes solely during M phase and is involved in inducing oocyte activation and initiating embryonic development up to the blastocyst stage. Is therefore a strong candidate for the egg-activating soluble sperm factor that is transferred from the sperm into the egg cytoplasm following gamete membrane fusion. May exert an inhibitory effect on phospholipase-C-coupled processes that depend on calcium ions and protein kinase C, including CFTR trafficking and function. In Rattus norvegicus (Rat), this protein is 1-phosphatidylinositol 4,5-bisphosphate phosphodiesterase zeta-1.